The following is a 244-amino-acid chain: rRNA adenine N-6-methyltransferase (244 aa).

Asn11, Ile13, Gly38, Glu59, Asp84, and Ser101 together coordinate S-adenosyl-L-methionine.

It belongs to the class I-like SAM-binding methyltransferase superfamily. rRNA adenine N(6)-methyltransferase family.

Functionally, involved in erythromycin resistance. In Lysinibacillus sphaericus (Bacillus sphaericus), this protein is rRNA adenine N-6-methyltransferase (ermG).